Consider the following 1482-residue polypeptide: MIERGKFRSLTLINWNGFFARTFDLDELVTTLSGGNGAGKSTTMAAFVTALIPDLTLLHFRNTTEAGATSGSRDKGLHGKLKAGVCYSVLDVINSRHQRVVVGVRLQQVAGRDRKVDIKPFAIQGLPTSVQPTAMLTETLNDRQARVLSLQELKEKLEEIEGVQFKQFNSITDYHSLMFDLGIVARRLRSASDRSKYYRLIEASLYGGISSAITRSLRDYLLPENSGVRKAFQDMEAALRENRMTLEAIRVTQSDRDLFKHLISEATNYVAADYMRHANERRIHLDKALEYRRELFTSRKQLVAEQYKHVEMARELGEQNGAEGDLEADYQAASDHLNLVQTALRQQEKIERYESDLDELQIRLEEQNEVVAEATEMQEENEARAEAAELEVDELKNQLADYQQALDVQQTRAIQYTQALQALQRAKELCHLPDLTPESADEWLETFQAKQQEATDKLLSLDQKMSVAQTAHSQFEQAYQLVTAINGPLARSDAWEVARELLRDGVNQRHLAEQVQPLRMRLNELEQRLREQQEAERLLAEFCKRYGKRVDIDDLEALHQELEARIASLSDSVSNAGEQRMSLRQELEQLQSRTQKLLQRAPVWLAAQSSLNQLSEQCGEEFESSQDVTEYLQQLLEREREAIVERDEVGARKRAIDEEIERLSQPGGAEDSRLNALAERFGGVLLSEIYDDVSLDDAPYFSALYGPSRNAIVVPDLSLIADQLEGLEDCPEDLYLIEGDPQSFDDSVFSVDELEKAVVVKIADRQWRYSRFPTLPLFGRAARENRIESLHAERETLSERFATLSFDVQKTQRLHQSFSRFIGSHVAVAFEPDPEAEIRKLNTRRGELERAISLHENDNQQSRVQFEQAKEGVAALNRILPRLNLLADETLADRVDEIQERLDEAQEAARFVQQHGNQLAKLEPVLSVLQSDPEQFEQLKEDYAYSQQVQRDARQQAFALAEVVQRRAHFGYSDSAEMLSGNSDLNEKLRHRLEQAETERSRTRDALRSHAAQLSQYGQVLASLKSSFDTKKELLTDLQKELQDIGVRADSGAEERARIRRDELHSQLSNNRSRRNQLEKALTLCEAEMDNLTRRLRKLERDYHEMREQVVTAKAGWCAVMRLVKDSGVERRLHRRELAYLSGDELRSMSDKALGALRPAVADNEHLRDVLRMSEDPKRPERKIQFFVAVYQHLRERIRQDIIRTDDPVEAIEQMEIELGRLTEELTSREQTLAISSRSVANIIRKTIQREQNRIRMLNQGLQSVSFGQVNSVRLNVNVLEAHATLLDVLSEQHEQHQDLFNSNRLTFSEALAKLYQRLNPQIDMGQRTPQTIGEELLDYRNYLEMEVEVNRGSDGWLRAESGALSTGEAIGTGMSILVMVVQSWEDESRRLRGKDISPCRLLFLDEAARLDARSIATLFELCDRLGMQLIIAAPENISPEKGTTYKLVRKVFQNTEHVHVVGLRGFAPQPPESLPEAADAS.

34 to 41 is a binding site for ATP; the sequence is GGNGAGKS. Coiled coils occupy residues 326 to 416, 509 to 603, 780 to 805, 835 to 923, 979 to 1116, and 1210 to 1265; these read LEAD…AIQY, RHLA…RAPV, RAAR…ATLS, EAEI…AKLE, LSGN…AKAG, and EAIE…LQSV. The interval 666 to 783 is flexible hinge; that stretch reads PGGAEDSRLN…TLPLFGRAAR (118 aa).

It belongs to the SMC family. MukB subfamily. As to quaternary structure, homodimerization via its hinge domain. Binds to DNA via its C-terminal region. Interacts, and probably forms a ternary complex, with MukE and MukF via its C-terminal region. The complex formation is stimulated by calcium or magnesium. Interacts with tubulin-related protein FtsZ.

The protein localises to the cytoplasm. It is found in the nucleoid. Its function is as follows. Plays a central role in chromosome condensation, segregation and cell cycle progression. Functions as a homodimer, which is essential for chromosome partition. Involved in negative DNA supercoiling in vivo, and by this means organize and compact chromosomes. May achieve or facilitate chromosome segregation by condensation DNA from both sides of a centrally located replisome during cell division. The polypeptide is Chromosome partition protein MukB (Enterobacter sp. (strain 638)).